The primary structure comprises 166 residues: NAD(P)H-quinone oxidoreductase subunit I, chloroplastic (166 aa).

2 4Fe-4S ferredoxin-type domains span residues 55 to 84 and 95 to 124; these read GRIH…VDWK and LNYS…MTEE. 8 residues coordinate [4Fe-4S] cluster: Cys64, Cys67, Cys70, Cys74, Cys104, Cys107, Cys110, and Cys114.

It belongs to the complex I 23 kDa subunit family. As to quaternary structure, NDH is composed of at least 16 different subunits, 5 of which are encoded in the nucleus. The cofactor is [4Fe-4S] cluster.

The protein localises to the plastid. It localises to the chloroplast thylakoid membrane. It catalyses the reaction a plastoquinone + NADH + (n+1) H(+)(in) = a plastoquinol + NAD(+) + n H(+)(out). The enzyme catalyses a plastoquinone + NADPH + (n+1) H(+)(in) = a plastoquinol + NADP(+) + n H(+)(out). Functionally, NDH shuttles electrons from NAD(P)H:plastoquinone, via FMN and iron-sulfur (Fe-S) centers, to quinones in the photosynthetic chain and possibly in a chloroplast respiratory chain. The immediate electron acceptor for the enzyme in this species is believed to be plastoquinone. Couples the redox reaction to proton translocation, and thus conserves the redox energy in a proton gradient. The protein is NAD(P)H-quinone oxidoreductase subunit I, chloroplastic of Acanthospermum australe (Paraguayan starburr).